We begin with the raw amino-acid sequence, 171 residues long: Adenine phosphoribosyltransferase (171 aa).

Belongs to the purine/pyrimidine phosphoribosyltransferase family. Homodimer.

Its subcellular location is the cytoplasm. The enzyme catalyses AMP + diphosphate = 5-phospho-alpha-D-ribose 1-diphosphate + adenine. It functions in the pathway purine metabolism; AMP biosynthesis via salvage pathway; AMP from adenine: step 1/1. Catalyzes a salvage reaction resulting in the formation of AMP, that is energically less costly than de novo synthesis. This chain is Adenine phosphoribosyltransferase, found in Ruminiclostridium cellulolyticum (strain ATCC 35319 / DSM 5812 / JCM 6584 / H10) (Clostridium cellulolyticum).